Here is a 132-residue protein sequence, read N- to C-terminus: NADH-quinone oxidoreductase subunit A 2 (132 aa).

The next 3 helical transmembrane spans lie at 9–29 (AWAF…MLGL), 66–86 (LVAM…LWAV), and 93–113 (WAGF…LFYL).

This sequence belongs to the complex I subunit 3 family. NDH-1 is composed of 13 different subunits. Subunits NuoA, H, J, K, L, M, N constitute the membrane sector of the complex.

It localises to the cell inner membrane. The catalysed reaction is a quinone + NADH + 5 H(+)(in) = a quinol + NAD(+) + 4 H(+)(out). Functionally, NDH-1 shuttles electrons from NADH, via FMN and iron-sulfur (Fe-S) centers, to quinones in the respiratory chain. The immediate electron acceptor for the enzyme in this species is believed to be ubiquinone. Couples the redox reaction to proton translocation (for every two electrons transferred, four hydrogen ions are translocated across the cytoplasmic membrane), and thus conserves the redox energy in a proton gradient. The polypeptide is NADH-quinone oxidoreductase subunit A 2 (Pseudomonas paraeruginosa (strain DSM 24068 / PA7) (Pseudomonas aeruginosa (strain PA7))).